The primary structure comprises 636 residues: Putative ankyrin repeat protein L766 (636 aa).

ANK repeat units lie at residues 63–97 (NNYL…DYEL), 99–129 (STCH…YIDS), 130–159 (FGNI…FFNC), 161–190 (YYYL…KSNN), 230–259 (FDEK…NYDF), 261–284 (TIIN…YLTD), 322–355 (SRII…KTSI), 372–400 (NPDE…NIPD), 425–455 (DSLE…DTTI), 517–546 (NSIE…NDNN), and 548–575 (LSWA…DIYQ).

This chain is Putative ankyrin repeat protein L766, found in Acanthamoeba polyphaga mimivirus (APMV).